Reading from the N-terminus, the 583-residue chain is R-linalool synthase QH5, chloroplastic (583 aa).

The N-terminal 40 residues, 1 to 40 (MASISLFPYSILKQTSPLARGTAYNRIYSTKTTGITVDVA), are a transit peptide targeting the chloroplast. Arg-298, Asp-335, Asp-339, Arg-476, and Asp-479 together coordinate (2E)-geranyl diphosphate. Asp-335 and Asp-339 together coordinate Mg(2+). The DDXXD motif signature appears at 335–339 (DDVYD). Residues Asp-479, Thr-483, and Glu-487 each coordinate Mg(2+). Residue Asp-492 coordinates K(+).

The protein belongs to the terpene synthase family. Tpsb subfamily. The cofactor is Mg(2+). It depends on Mn(2+) as a cofactor. Requires K(+) as cofactor. In terms of tissue distribution, expressed in every aerial organ except for the stem stele of mature plants. Not detected in roots.

The protein resides in the plastid. It localises to the chloroplast. The enzyme catalyses (2E)-geranyl diphosphate + H2O = (R)-linalool + diphosphate. It functions in the pathway secondary metabolite biosynthesis; terpenoid biosynthesis. Its function is as follows. Monoterpene synthase that catalyzes the formation of (3R)-linalool from geranyl diphosphate, but not from isopentenyl diphosphate, dimethylallyl diphosphate, chrysanthemyl diphosphate, farnesyl diphosphate, (+)-copalyl diphosphate or geranylgeranyl diphosphate. The protein is R-linalool synthase QH5, chloroplastic of Artemisia annua (Sweet wormwood).